Here is a 247-residue protein sequence, read N- to C-terminus: Protein eak-4 (247 aa).

G2 is lipidated: N-myristoyl glycine.

As to expression, expressed in the 2 embryonic head hypodermal cells XXXL/R.

The protein localises to the cell membrane. Functionally, together with eak-6 and sdf-9, negatively regulates dauer larva formation downstream of the insulin-like receptor daf-2 and in parallel with age-1, pdk-1 and akt-1. This chain is Protein eak-4, found in Caenorhabditis elegans.